We begin with the raw amino-acid sequence, 95 residues long: Feather keratin B-4 (95 aa).

Residue Ser-1 is modified to N-acetylserine.

Belongs to the avian keratin family. The avian keratins (F-ker, S-ker, C-ker and B-ker) are a complex mixture of very similar polypeptides.

This Anas platyrhynchos (Mallard) protein is Feather keratin B-4.